The primary structure comprises 119 residues: NADH-quinone oxidoreductase subunit A (119 aa).

The next 3 helical transmembrane spans lie at Val9–Leu29, Leu63–Val83, and Ile88–Val108.

Belongs to the complex I subunit 3 family. As to quaternary structure, NDH-1 is composed of 14 different subunits. Subunits NuoA, H, J, K, L, M, N constitute the membrane sector of the complex.

The protein resides in the cell inner membrane. It catalyses the reaction a quinone + NADH + 5 H(+)(in) = a quinol + NAD(+) + 4 H(+)(out). In terms of biological role, NDH-1 shuttles electrons from NADH, via FMN and iron-sulfur (Fe-S) centers, to quinones in the respiratory chain. The immediate electron acceptor for the enzyme in this species is believed to be ubiquinone. Couples the redox reaction to proton translocation (for every two electrons transferred, four hydrogen ions are translocated across the cytoplasmic membrane), and thus conserves the redox energy in a proton gradient. The polypeptide is NADH-quinone oxidoreductase subunit A (Leptothrix cholodnii (strain ATCC 51168 / LMG 8142 / SP-6) (Leptothrix discophora (strain SP-6))).